We begin with the raw amino-acid sequence, 151 residues long: Ribosome maturation factor RimP (151 aa).

This sequence belongs to the RimP family.

The protein localises to the cytoplasm. Its function is as follows. Required for maturation of 30S ribosomal subunits. This is Ribosome maturation factor RimP from Vibrio atlanticus (strain LGP32) (Vibrio splendidus (strain Mel32)).